The sequence spans 267 residues: Acryloyl-CoA reductase electron transfer subunit gamma (267 aa).

In terms of assembly, heterohexadecamer; tetramer of tetramers. Each tetramer is composed of 2 alpha (AcrC), a beta (AcrA) and a gamma (AcrB) subunit.

The protein localises to the cytoplasm. Its function is as follows. Part of the ETF-acryloyl-CoA reductase complex involved in the pathway of L-alanine fermentation. The electron transfer flavoprotein (ETF) serves as a specific electron acceptor for acryloyl-CoA reductase. The protein is Acryloyl-CoA reductase electron transfer subunit gamma (acrB) of Anaerotignum propionicum (Clostridium propionicum).